Here is a 530-residue protein sequence, read N- to C-terminus: 26S proteasome non-ATPase regulatory subunit 3 (530 aa).

Over residues 1–16 the composition is skewed to basic and acidic residues; that stretch reads MKQEGSARRRGADKAK. A disordered region spans residues 1-65; the sequence is MKQEGSARRR…TEHSQRELDT (65 aa). Over residues 17 to 30 the composition is skewed to pro residues; it reads PPPGGEQEPPPPAP. Lysine 36 is covalently cross-linked (Glycyl lysine isopeptide (Lys-Gly) (interchain with G-Cter in SUMO1); alternate). Lysine 36 participates in a covalent cross-link: Glycyl lysine isopeptide (Lys-Gly) (interchain with G-Cter in SUMO2); alternate. Residues 282–461 enclose the PCI domain; it reads ARYLYYTGRI…GYVQSKEMID (180 aa). Residues serine 414 and serine 426 each carry the phosphoserine modification. The disordered stretch occupies residues 496-530; it reads SYNKDLESAEERREREQQDLEFAKEMAEDDDDSFP. Basic and acidic residues predominate over residues 497–521; the sequence is YNKDLESAEERREREQQDLEFAKEM.

It belongs to the proteasome subunit S3 family. In terms of assembly, component of the 19S proteasome regulatory particle complex. The 26S proteasome consists of a 20S core particle (CP) and two 19S regulatory subunits (RP). The regulatory particle is made of a lid composed of 9 subunits including PSMD3, a base containing 6 ATPases and few additional components. Interacts with UBQLN1 (via ubiquitin-like domain). Interacts with ERCC6.

Functionally, component of the 26S proteasome, a multiprotein complex involved in the ATP-dependent degradation of ubiquitinated proteins. This complex plays a key role in the maintenance of protein homeostasis by removing misfolded or damaged proteins, which could impair cellular functions, and by removing proteins whose functions are no longer required. Therefore, the proteasome participates in numerous cellular processes, including cell cycle progression, apoptosis, or DNA damage repair. In Mus musculus (Mouse), this protein is 26S proteasome non-ATPase regulatory subunit 3 (Psmd3).